The sequence spans 215 residues: Ectodysplasin-A receptor-associated adapter protein (215 aa).

2 disordered regions span residues 1-41 (MGLR…FNMS) and 62-86 (LNCP…TGDP). Residues 17 to 28 (GHQEDHMVKEPV) are compositionally biased toward basic and acidic residues. Residues 123–202 (DVIRIKLDPC…KVLRRWVDEE (80 aa)) form the Death domain.

In terms of assembly, self-associates and binds EDAR, TRAF1, TRAF2 and TRAF3. Detected in adult pancreas, placenta and fetal skin, and at lower levels in lung, thymus, prostate and testis.

The protein resides in the cytoplasm. Functionally, adapter protein that interacts with EDAR DEATH domain and couples the receptor to EDA signaling pathway during morphogenesis of ectodermal organs. Mediates the activation of NF-kappa-B. The chain is Ectodysplasin-A receptor-associated adapter protein (EDARADD) from Homo sapiens (Human).